A 349-amino-acid polypeptide reads, in one-letter code: DNA replication and repair protein RecF (349 aa).

30–37 provides a ligand contact to ATP; the sequence is GKNGSGKT.

This sequence belongs to the RecF family.

The protein resides in the cytoplasm. Its function is as follows. The RecF protein is involved in DNA metabolism; it is required for DNA replication and normal SOS inducibility. RecF binds preferentially to single-stranded, linear DNA. It also seems to bind ATP. The polypeptide is DNA replication and repair protein RecF (Francisella tularensis subsp. novicida (strain U112)).